A 269-amino-acid chain; its full sequence is Eukaryotic translation initiation factor 3 subunit G-1 (269 aa).

The RRM domain maps to Ala188 to Pro266.

This sequence belongs to the eIF-3 subunit G family. Component of the eukaryotic translation initiation factor 3 (eIF-3) complex. The eIF-3 complex interacts with pix.

It is found in the cytoplasm. Functionally, RNA-binding component of the eukaryotic translation initiation factor 3 (eIF-3) complex, which is involved in protein synthesis of a specialized repertoire of mRNAs and, together with other initiation factors, stimulates binding of mRNA and methionyl-tRNAi to the 40S ribosome. The eIF-3 complex specifically targets and initiates translation of a subset of mRNAs involved in cell proliferation. This subunit can bind 18S rRNA. The chain is Eukaryotic translation initiation factor 3 subunit G-1 from Drosophila persimilis (Fruit fly).